A 149-amino-acid polypeptide reads, in one-letter code: Flagellar assembly factor FliW (149 aa).

The protein belongs to the FliW family. Interacts with translational regulator CsrA and flagellin(s).

The protein resides in the cytoplasm. Its function is as follows. Acts as an anti-CsrA protein, binds CsrA and prevents it from repressing translation of its target genes, one of which is flagellin. Binds to flagellin and participates in the assembly of the flagellum. The protein is Flagellar assembly factor FliW of Thermotoga petrophila (strain ATCC BAA-488 / DSM 13995 / JCM 10881 / RKU-1).